A 301-amino-acid chain; its full sequence is Recombination-associated protein RdgC (301 aa).

The protein belongs to the RdgC family.

Its subcellular location is the cytoplasm. It is found in the nucleoid. May be involved in recombination. This chain is Recombination-associated protein RdgC, found in Pseudoalteromonas atlantica (strain T6c / ATCC BAA-1087).